A 319-amino-acid polypeptide reads, in one-letter code: Protein SODIUM POTASSIUM ROOT DEFECTIVE 1 (319 aa).

Residues 1-13 (MLCASQASTTTLC) show a composition bias toward polar residues. 2 disordered regions span residues 1-113 (MLCA…TPQG) and 191-248 (SPDN…NSSS). Positions 14–27 (STMDQTSQPSSSSS) are enriched in low complexity. Residues 36-49 (AIDRHNPIIRDGRR) are compositionally biased toward basic and acidic residues. Residues 58-67 (LNPSSSSSST) show a composition bias toward low complexity. Polar residues-rich tracts occupy residues 104-113 (SCFSSDTPQG) and 200-210 (TKASPTASLSS). The span at 224–242 (SPPPPPPPSPPQSSPPSPP) shows a compositional bias: pro residues. The HMA domain maps to 249-315 (DQVVVLRVSL…KVKNAQFWPE (67 aa)). The Zn(2+) site is built by Cys260 and Cys263.

In terms of assembly, interacts with FT, but not with TSF (TWIN SISTER OF FT). Expressed in vascular tissues of cotyledons, rosette leaves and roots in developing seedlings before and during the floral transition. Expressed specifically in the phloem companion cells. Not detected in embryos or seeds. Not detected in the vegetative shoot apex.

It is found in the cytoplasm. It localises to the nucleus. Its subcellular location is the endoplasmic reticulum. In terms of biological role, required for root meristem maintenance after germination. Involved in phloem translocation, starch accumulation and flowering. Promotes flowering in the photoperiod pathway. Regulates long-distance movement of FT from leaves to the shoot apex through the phloem stream. The chain is Protein SODIUM POTASSIUM ROOT DEFECTIVE 1 from Arabidopsis thaliana (Mouse-ear cress).